We begin with the raw amino-acid sequence, 299 residues long: Protein-methionine-sulfoxide reductase catalytic subunit MsrP (299 aa).

Positions 1 to 44 (MAHRWINDLTPADITPRGAWMNRRQVMAGMAGAGLAAFAGSAQA) form a signal peptide, tat-type signal. Mo-molybdopterin is bound by residues Asn59, 62-63 (YE), Cys117, Thr152, Asn200, Arg205, and 216-218 (SIK).

Belongs to the MsrP family. As to quaternary structure, heterodimer of a catalytic subunit (MsrP) and a heme-binding subunit (MsrQ). Requires Mo-molybdopterin as cofactor. Predicted to be exported by the Tat system. The position of the signal peptide cleavage has not been experimentally proven.

Its subcellular location is the periplasm. It carries out the reaction L-methionyl-[protein] + a quinone + H2O = L-methionyl-(S)-S-oxide-[protein] + a quinol. It catalyses the reaction L-methionyl-[protein] + a quinone + H2O = L-methionyl-(R)-S-oxide-[protein] + a quinol. Functionally, part of the MsrPQ system that repairs oxidized periplasmic proteins containing methionine sulfoxide residues (Met-O), using respiratory chain electrons. Thus protects these proteins from oxidative-stress damage caused by reactive species of oxygen and chlorine generated by the host defense mechanisms. MsrPQ is essential for the maintenance of envelope integrity under bleach stress, rescuing a wide series of structurally unrelated periplasmic proteins from methionine oxidation. The catalytic subunit MsrP is non-stereospecific, being able to reduce both (R-) and (S-) diastereoisomers of methionine sulfoxide. The protein is Protein-methionine-sulfoxide reductase catalytic subunit MsrP of Ruegeria pomeroyi (strain ATCC 700808 / DSM 15171 / DSS-3) (Silicibacter pomeroyi).